A 631-amino-acid polypeptide reads, in one-letter code: Glutamine--fructose-6-phosphate aminotransferase [isomerizing] (631 aa).

Cys-2 serves as the catalytic Nucleophile; for GATase activity. The Glutamine amidotransferase type-2 domain occupies 2–225; it reads CGIVGYIGTQ…NGEIARLTPL (224 aa). 2 SIS domains span residues 298 to 446 and 480 to 621; these read LDPQ…QRHS and LAHE…VDQP. Residue Lys-626 is the For Fru-6P isomerization activity of the active site.

Homodimer.

It is found in the cytoplasm. The catalysed reaction is D-fructose 6-phosphate + L-glutamine = D-glucosamine 6-phosphate + L-glutamate. Catalyzes the first step in hexosamine metabolism, converting fructose-6P into glucosamine-6P using glutamine as a nitrogen source. In Synechocystis sp. (strain ATCC 27184 / PCC 6803 / Kazusa), this protein is Glutamine--fructose-6-phosphate aminotransferase [isomerizing].